The primary structure comprises 1169 residues: MSCTWIAFLLLLGFVSCLGFNLDAEKLTHFHMDGAEFGHSVLQYDSSWVVVGAPKEIKATNQIGGLYKCGYHTGNCEPISLQVPPEAVNISLGLSLAAATNPSWLLACGPTVHHTCRENIYLTGLCFLLSSSFKQSQNFPTAQQECPKQDQDIVFLIDGSGSISSTDFEKMLDFVKAVMSQLQRPSTRFSLMQFSDYFRVHFTFNNFISTSSPLSLLGSVRQLRGYTYTASAIKHVITELFTTQSGARQDATKVLIVITDGRKQGDNLSYDSVIPMAEAASIIRYAIGVGKAFYNEHSKQELKAIASMPSHEYVFSVENFDALKDIENQLKEKIFAIEGTETPSSSTFELEMSQEGFSAVFTPDGPVLGAVGSFSWSGGAFLYPSNMRPTFINMSQENEDMRDAYLGYSTALAFWKGVHSLILGAPRHQHTGKVVIFTQESRHWRPKSEVRGTQIGSYFGASLCSVDMDRDGSTDLVLIGVPHYYEHTRGGQVSVCPMPGVGSRWHCGTTLHGEQGHPWGRFGAALTVLGDVNGDSLADVAIGAPGEEENRGAVYIFHGASRQDIAPSPSQRISASQIPSRIQYFGQSLSGGQDLTRDGLVDLAVGSKGRVLLLRTRPILRVSPTVHFTPAEISRSVFECQEQVAPEQTLSDATVCLHIHESPKTQLGDLRSTVTFDLALDHGRLSTRAIFKETKTRALTRVKTLGLNKHCESVKLLLPACVEDSVTPITLRLNFSLVGVPISSLQNLQPMLAVDDQTYFTASLPFEKNCGADHICQDDLSVVFGFPDLKTLVVGSDLELNVDVTVSNDGEDSYGTTVTLFYPVGLSFRRVAEGQVFLRKKEDQQWQRRGQHSLHLMCDSTPDRSQGLWSTSCSSRHVIFRGGSQMTFLVTFDVSPKAELGDRLLLRARVGSENNVPGTPKTTFQLELPVKYAVYTMISSHDQFTKYLNFSTSEKEKTSVVEHRFQVNNLGQRDVPVSINFWVPIELKGEAVWTVMVSHPQNPLTQCYRNRLKPTQFDLLTHMQKSPVLDCSIADCLHLRCDIPSLGILDELYFILKGNLSFGWISQTLQKKVLLLSEAEITFNTSVYSQLPGQEAFLRAQTKTVLEMYKVHNPVPLIVGSSVGGLLLLAIITAILYKAGFFKRQYKEMLEEANGQFVSDGTPTPQVAQ.

Positions 1–19 (MSCTWIAFLLLLGFVSCLG) are cleaved as a signal peptide. The Extracellular segment spans residues 20-1116 (FNLDAEKLTH…EMYKVHNPVP (1097 aa)). FG-GAP repeat units follow at residues 23–78 (DAEK…NCEP) and 79–138 (ISLQ…QSQN). An intrachain disulfide couples cysteine 69 to cysteine 76. A glycan (N-linked (GlcNAc...) asparagine) is linked at asparagine 89. Intrachain disulfides connect cysteine 108–cysteine 126 and cysteine 116–cysteine 146. One can recognise a VWFA domain in the interval 152–330 (DIVFLIDGSG…DALKDIENQL (179 aa)). Positions 158, 160, 162, and 260 each coordinate Mg(2+). A glycan (N-linked (GlcNAc...) asparagine) is linked at asparagine 267. FG-GAP repeat units lie at residues 341-392 (ETPS…PTFI), 393-444 (NMSQ…SRHW), 445-505 (RPKS…GSRW), 508-566 (GTTL…QDIA), and 571-631 (QRIS…FTPA). A glycan (N-linked (GlcNAc...) asparagine) is linked at asparagine 393. Residues aspartate 467, aspartate 469, aspartate 471, and aspartate 475 each coordinate Ca(2+). Cysteines 496 and 507 form a disulfide. 7 residues coordinate Ca(2+): aspartate 531, asparagine 533, aspartate 535, aspartate 539, aspartate 594, aspartate 598, and aspartate 602. Cystine bridges form between cysteine 640–cysteine 721 and cysteine 656–cysteine 711. N-linked (GlcNAc...) asparagine glycosylation is present at asparagine 734. Intrachain disulfides connect cysteine 770–cysteine 776 and cysteine 858–cysteine 873. Residue asparagine 949 is glycosylated (N-linked (GlcNAc...) asparagine). Cystine bridges form between cysteine 1007–cysteine 1031 and cysteine 1036–cysteine 1041. Residues asparagine 1059 and asparagine 1084 are each glycosylated (N-linked (GlcNAc...) asparagine). The chain crosses the membrane as a helical span at residues 1117-1137 (LIVGSSVGGLLLLAIITAILY). Residues 1138-1169 (KAGFFKRQYKEMLEEANGQFVSDGTPTPQVAQ) lie on the Cytoplasmic side of the membrane. The GFFKR motif signature appears at 1140–1144 (GFFKR).

It belongs to the integrin alpha chain family. In terms of assembly, heterodimer of an alpha and a beta subunit. Alpha-X associates with beta-2.

The protein localises to the membrane. Integrin alpha-X/beta-2 is a receptor for fibrinogen. It recognizes the sequence G-P-R in fibrinogen. It mediates cell-cell interaction during inflammatory responses. It is especially important in monocyte adhesion and chemotaxis. In Mus musculus (Mouse), this protein is Integrin alpha-X (Itgax).